We begin with the raw amino-acid sequence, 175 residues long: Clathrin-associated protein AP-3 complex component APS3 (175 aa).

The protein belongs to the adaptor complexes small subunit family. In terms of assembly, adaptor protein complex 3 (AP-3) is a heterotetramer composed of 2 large adaptins, a medium adaptin and a small adaptin.

Its subcellular location is the golgi apparatus. It is found in the cytoplasmic vesicle membrane. Part of the AP-3 complex, an adapter-related complex which is not clathrin-associated. The complex is associated with the Golgi region as well as more peripheral structures. It facilitates the budding of vesicles from the Golgi membrane. Involved in vacuolar trafficking and contributes to hyphal growth and pathogenesis. This chain is Clathrin-associated protein AP-3 complex component APS3 (APS3), found in Candida albicans (strain SC5314 / ATCC MYA-2876) (Yeast).